The following is a 297-amino-acid chain: Bifunctional protein FolD 2 (297 aa).

NADP(+) contacts are provided by residues 173-175, serine 198, and isoleucine 239; that span reads GKS.

This sequence belongs to the tetrahydrofolate dehydrogenase/cyclohydrolase family. In terms of assembly, homodimer.

The catalysed reaction is (6R)-5,10-methylene-5,6,7,8-tetrahydrofolate + NADP(+) = (6R)-5,10-methenyltetrahydrofolate + NADPH. It catalyses the reaction (6R)-5,10-methenyltetrahydrofolate + H2O = (6R)-10-formyltetrahydrofolate + H(+). Its pathway is one-carbon metabolism; tetrahydrofolate interconversion. Catalyzes the oxidation of 5,10-methylenetetrahydrofolate to 5,10-methenyltetrahydrofolate and then the hydrolysis of 5,10-methenyltetrahydrofolate to 10-formyltetrahydrofolate. This Sinorhizobium medicae (strain WSM419) (Ensifer medicae) protein is Bifunctional protein FolD 2.